Here is a 517-residue protein sequence, read N- to C-terminus: Crotonobetaine/carnitine--CoA ligase (517 aa).

Belongs to the ATP-dependent AMP-binding enzyme family.

The enzyme catalyses 4-(trimethylamino)butanoate + ATP + CoA = 4-(trimethylamino)butanoyl-CoA + AMP + diphosphate. It carries out the reaction crotonobetaine + ATP + CoA = crotonobetainyl-CoA + AMP + diphosphate. It catalyses the reaction (R)-carnitine + ATP + CoA = (R)-carnitinyl-CoA + AMP + diphosphate. It participates in amine and polyamine metabolism; carnitine metabolism. In terms of biological role, catalyzes the transfer of CoA to carnitine, generating the initial carnitinyl-CoA needed for the CaiB reaction cycle. Also has activity toward crotonobetaine and gamma-butyrobetaine. This Escherichia coli (strain ATCC 8739 / DSM 1576 / NBRC 3972 / NCIMB 8545 / WDCM 00012 / Crooks) protein is Crotonobetaine/carnitine--CoA ligase.